Consider the following 977-residue polypeptide: AP-2 complex subunit alpha-1 (977 aa).

The disordered stretch occupies residues 614–702; that stretch reads AKLKRKKGPG…PSLGPTPEEA (89 aa). Residues Ser626 and Ser652 each carry the phosphoserine modification. Residues 646 to 657 are compositionally biased toward low complexity; the sequence is PTPSTVSTPSPS. At Thr653 the chain carries Phosphothreonine. Position 655 is a phosphoserine (Ser655). The segment covering 666–675 has biased composition (pro residues); sequence APPPAAPPAP.

The protein belongs to the adaptor complexes large subunit family. Adaptor protein complex 2 (AP-2) is a heterotetramer composed of two large adaptins (alpha-type subunit AP2A1 or AP2A2 and beta-type subunit AP2B1), a medium adaptin (mu-type subunit AP2M1) and a small adaptin (sigma-type subunit AP2S1). Interacts with HIP1 and RAB11FIP2. Interacts with SLC12A5. Interacts with clathrin. Interacts with SGIP1. Interacts with RFTN1. Interacts with KIAA1107. Interacts with PICALM. Together with AP2B1 and AP2M1, it interacts with ADAM10; this interaction facilitates ADAM10 endocytosis from the plasma membrane during long-term potentiation in hippocampal neurons. Interacts with ABCB11; this interaction regulates cell membrane expression of ABCB11 through its internalization in a clathrin-dependent manner and its subsequent degradation. Probably interacts with ACE2 (via endocytic sorting signal motif); the interaction is inhibited by ACE2 phosphorylation. Expressed in the brain (at protein level). Isoform A: Expressed only in neuronal tissue and skeletal muscle. Isoform B: Widely expressed.

The protein localises to the cell membrane. It localises to the membrane. The protein resides in the coated pit. Component of the adaptor protein complex 2 (AP-2). Adaptor protein complexes function in protein transport via transport vesicles in different membrane traffic pathways. Adaptor protein complexes are vesicle coat components and appear to be involved in cargo selection and vesicle formation. AP-2 is involved in clathrin-dependent endocytosis in which cargo proteins are incorporated into vesicles surrounded by clathrin (clathrin-coated vesicles, CCVs) which are destined for fusion with the early endosome. The clathrin lattice serves as a mechanical scaffold but is itself unable to bind directly to membrane components. Clathrin-associated adaptor protein (AP) complexes which can bind directly to both the clathrin lattice and to the lipid and protein components of membranes are considered to be the major clathrin adaptors contributing the CCV formation. AP-2 also serves as a cargo receptor to selectively sort the membrane proteins involved in receptor-mediated endocytosis. AP-2 seems to play a role in the recycling of synaptic vesicle membranes from the presynaptic surface. AP-2 recognizes Y-X-X-[FILMV] (Y-X-X-Phi) and [ED]-X-X-X-L-[LI] endocytosis signal motifs within the cytosolic tails of transmembrane cargo molecules. AP-2 may also play a role in maintaining normal post-endocytic trafficking through the ARF6-regulated, non-clathrin pathway. The AP-2 alpha subunit binds polyphosphoinositide-containing lipids, positioning AP-2 on the membrane. During long-term potentiation in hippocampal neurons, AP-2 is responsible for the endocytosis of ADAM10. The AP-2 alpha subunit acts via its C-terminal appendage domain as a scaffolding platform for endocytic accessory proteins. The AP-2 alpha and AP-2 sigma subunits are thought to contribute to the recognition of the [ED]-X-X-X-L-[LI] motif. The sequence is that of AP-2 complex subunit alpha-1 (Ap2a1) from Mus musculus (Mouse).